Here is a 306-residue protein sequence, read N- to C-terminus: Formimidoylglutamase (306 aa).

Polar residues predominate over residues 1 to 13 (MFQNATDWTPTST). The tract at residues 1–36 (MFQNATDWTPTSTDPRDEQFGGVVEPVPTPSDADDY) is disordered. Mn(2+) contacts are provided by N123, D147, H149, D151, D234, and D236.

This sequence belongs to the arginase family. Mn(2+) is required as a cofactor.

The catalysed reaction is N-formimidoyl-L-glutamate + H2O = formamide + L-glutamate. It participates in amino-acid degradation; L-histidine degradation into L-glutamate; L-glutamate from N-formimidoyl-L-glutamate (hydrolase route): step 1/1. In terms of biological role, catalyzes the conversion of N-formimidoyl-L-glutamate to L-glutamate and formamide. The polypeptide is Formimidoylglutamase (Halobacterium salinarum (strain ATCC 29341 / DSM 671 / R1)).